The following is a 365-amino-acid chain: DNA replication and repair protein RecF (365 aa).

An ATP-binding site is contributed by 23–30 (GPNGIGKS).

The protein belongs to the RecF family.

It localises to the cytoplasm. In terms of biological role, the RecF protein is involved in DNA metabolism; it is required for DNA replication and normal SOS inducibility. RecF binds preferentially to single-stranded, linear DNA. It also seems to bind ATP. The chain is DNA replication and repair protein RecF from Parasynechococcus marenigrum (strain WH8102).